Here is a 282-residue protein sequence, read N- to C-terminus: Trans,polycis-polyprenyl diphosphate synthase ((2Z,6E)-farnesyl diphosphate specific) (282 aa).

The tract at residues 1 to 30 is disordered; the sequence is MSPKTVFSTDTHREPIPPQPHPSGARPPQL. The active site involves aspartate 44. Aspartate 44 contacts Mg(2+). Residues 45–48, tryptophan 49, arginine 57, histidine 61, and 89–91 each bind substrate; these read GNGR and STE. The active-site Proton acceptor is the asparagine 92. Substrate contacts are provided by residues tryptophan 93, arginine 95, arginine 212, and 218–220; that span reads RLS. Residue glutamate 231 participates in Mg(2+) binding. The disordered stretch occupies residues 262–282; the sequence is GGAEPNPVGPPQSAAGAQGQD.

It belongs to the UPP synthase family. Homodimer. The cofactor is Mg(2+).

It carries out the reaction (2Z,6E)-farnesyl diphosphate + 10 isopentenyl diphosphate = di-trans,deca-cis-tridecaprenyl diphosphate + 10 diphosphate. The catalysed reaction is (2Z,6E)-farnesyl diphosphate + 11 isopentenyl diphosphate = di-trans,undeca-cis-tetradecaprenyl diphosphate + 11 diphosphate. The enzyme catalyses (2Z,6E)-farnesyl diphosphate + 9 isopentenyl diphosphate = di-trans,nona-cis-dodecaprenyl diphosphate + 9 diphosphate. Its function is as follows. Catalyzes the synthesis of Z,E-mixed prenyl diphosphates by a condensation of isopentenyl diphosphate to an allylic diphosphate. It shows a large substrate specificity accepting dimethylallyl diphosphate (DMAPP), GPP, E,Efarnesyl diphosphate (FPP), E,E,E-geranylgeranyl diphosphate (GGPP), neryl diphosphate (Z-GPP), and (2Z,6E)-farnesyl diphosphate (Z,E-FPP) as allylic substrates. The enzyme exhibits the highest activity when Z,E-FPP is employed as an allylic substrate. The major product is dodecaprenyl diphosphate (C60) under every allylic substrate conditions, but the enzyme is also able to synthesize even C70 prenyl diphosphate as the maximum chain-length product. The chain is Trans,polycis-polyprenyl diphosphate synthase ((2Z,6E)-farnesyl diphosphate specific) from Thermobifida fusca (strain YX).